A 238-amino-acid chain; its full sequence is Ribonuclease PH (238 aa).

Positions 64 to 86 are disordered; sequence GMLPRSTGSRMDREAARGKQSGR. Phosphate contacts are provided by residues R86 and 124–126; that span reads GTR.

It belongs to the RNase PH family. In terms of assembly, homohexameric ring arranged as a trimer of dimers.

It carries out the reaction tRNA(n+1) + phosphate = tRNA(n) + a ribonucleoside 5'-diphosphate. Functionally, phosphorolytic 3'-5' exoribonuclease that plays an important role in tRNA 3'-end maturation. Removes nucleotide residues following the 3'-CCA terminus of tRNAs; can also add nucleotides to the ends of RNA molecules by using nucleoside diphosphates as substrates, but this may not be physiologically important. Probably plays a role in initiation of 16S rRNA degradation (leading to ribosome degradation) during starvation. The chain is Ribonuclease PH from Methylobacillus flagellatus (strain ATCC 51484 / DSM 6875 / VKM B-1610 / KT).